A 1748-amino-acid polypeptide reads, in one-letter code: Flagellar attachment zone protein 1 (1748 aa).

Coiled coils occupy residues 613–657 (REQE…KLQK), 684–864 (VTLD…HKVR), and 903–1663 (NDHM…SALE). 41 tandem repeats follow at residues 1012–1025 (EELELKAAENEKLA), 1026–1039 (EELELKAAENEKLA), 1040–1053 (EELELKAAENEKLA), 1054–1067 (EALDLKAAENEKLA), 1068–1081 (EELELKVAENEKLA), 1082–1095 (EELELKVAENEKLA), 1096–1109 (EELELKAAENEKLA), 1110–1123 (EELELKAAENEKLA), 1124–1137 (EELELKAAENEKLA), 1138–1151 (EELELKAAENEKLA), 1152–1165 (EALDLKAAENEKLA), 1166–1179 (EELDLKAAENEKLA), 1180–1193 (EELELKVAENEKLA), 1194–1207 (EELELKAAENEKLA), 1208–1221 (EELELKAAENEKLA), 1222–1235 (EELELKAAENEKLA), 1236–1249 (EELELKVAENEKLA), 1250–1263 (EELELKAAENEKLA), 1264–1277 (EELELKAAENEKLA), 1278–1291 (EELELKAAENEKLA), 1292–1305 (EELELKVAENEKLA), 1306–1319 (EELELKAAENEKLA), 1320–1333 (EELELKAAENEKLA), 1334–1347 (EELELKAAENEKLA), 1348–1361 (EELELKAAENEKLA), 1362–1375 (EELELKAAENEKLA), 1376–1389 (EELELKAAENEKLA), 1390–1403 (EELELKAAENEKLA), 1404–1417 (EELELKAAENEKLA), 1418–1431 (EELELKAAENEKLA), 1432–1445 (EELELKAAENEKLA), 1446–1459 (EELELKAAENEKLA), 1460–1473 (EELELKAAENEKLA), 1474–1487 (EELELKAAENEKLA), 1488–1501 (EELELKAAENEKLA), 1502–1515 (EELELKAAENEKLA), 1516–1529 (EELELKAAENEKLA), 1530–1543 (EELELKAAENEKLA), 1544–1557 (EELELKVAENEKLA), 1558–1571 (EELELKVAENEKLA), and 1572–1585 (EELELKVAENKRLA). The tract at residues 1012-1529 (EELELKAAEN…LKAAENEKLA (518 aa)) is 41 X 14 AA tandem repeats of E-E-L-E-L-K-[VA]-A-E-N-E-K-L-A.

Its subcellular location is the cell projection. The protein resides in the cilium. It localises to the flagellum. Its function is as follows. A component of FAZ filament that is required for correct FAZ assembly and attachment. Not essential for new flagellum growth. This is Flagellar attachment zone protein 1 from Trypanosoma brucei gambiense (strain MHOM/CI/86/DAL972).